The primary structure comprises 278 residues: MQKIKLKVSPFFKNLFGPPIEIEEAAGMVSHAANLFASVQLWECAGKAFFKSGDMLLQKNKNSIAAASSFVDAANAFKKIDSYEAINCLSKAIEVYTCLGKFYTVARCHMNIAAIYENDILELDKAIFHYENASGYYGGEGYNKLSDDCMLLIARLSIQKEDFDRAGKIFEQVGYNRMNTMLSKYESRHQLLYAIMCYLCSDVSRAKRSLDKYKDIFPAFKDFKECKFIEKILAACETKNIETFTSAIEEYDHGNTIDEALMSMLLTIRKATFEDEVE.

The protein belongs to the SNAP family.

This is Soluble NSF attachment protein homolog FPV011 from Fowlpox virus (strain NVSL) (FPV).